A 514-amino-acid chain; its full sequence is Multifunctional alkaline phosphatase superfamily protein pRL90232 (514 aa).

Mn(2+) contacts are provided by Asp12, Cys57, Asp324, and His325. The active-site Nucleophile is the Cys57. Position 57 is a 3-oxoalanine (Cys) (Cys57).

The protein belongs to the alkaline phosphatase superfamily. Homotetramer. Requires Mn(2+) as cofactor. The conversion to 3-oxoalanine (also known as C-formylglycine, FGly), of a serine or cysteine residue in prokaryotes and of a cysteine residue in eukaryotes, is critical for catalytic activity.

Functionally, hydrolytic enzyme with a broad substrate specificity acting on phosphate diesters and phosphonate monoesters. The polypeptide is Multifunctional alkaline phosphatase superfamily protein pRL90232 (Rhizobium johnstonii (strain DSM 114642 / LMG 32736 / 3841) (Rhizobium leguminosarum bv. viciae)).